Here is a 182-residue protein sequence, read N- to C-terminus: Ribosome maturation factor RimM (182 aa).

The PRC barrel domain occupies 106 to 179 (EGEFHVLDLI…RIEITPPPGL (74 aa)).

This sequence belongs to the RimM family. Binds ribosomal protein uS19.

It is found in the cytoplasm. In terms of biological role, an accessory protein needed during the final step in the assembly of 30S ribosomal subunit, possibly for assembly of the head region. Essential for efficient processing of 16S rRNA. May be needed both before and after RbfA during the maturation of 16S rRNA. It has affinity for free ribosomal 30S subunits but not for 70S ribosomes. The protein is Ribosome maturation factor RimM of Synechococcus elongatus (strain ATCC 33912 / PCC 7942 / FACHB-805) (Anacystis nidulans R2).